A 160-amino-acid polypeptide reads, in one-letter code: Iron-sulfur assembly protein IscA1 (160 aa).

This sequence belongs to the HesB/IscA family. As to quaternary structure, tetramer.

The protein resides in the mitochondrion. Its pathway is cofactor biosynthesis; iron-sulfur cluster biosynthesis. In terms of biological role, participates in iron-sulfur cluster formation (ISC) pathway for iron-sulfur (Fe-S) cluster biogenesis. Can bind iron and [4Fe-4S] clusters. May function as an iron chaperone. This Plasmodium falciparum (isolate 3D7) protein is Iron-sulfur assembly protein IscA1.